We begin with the raw amino-acid sequence, 198 residues long: dTTP/UTP pyrophosphatase (198 aa).

Asp-75 acts as the Proton acceptor in catalysis.

Belongs to the Maf family. YhdE subfamily. A divalent metal cation serves as cofactor.

It localises to the cytoplasm. The enzyme catalyses dTTP + H2O = dTMP + diphosphate + H(+). It catalyses the reaction UTP + H2O = UMP + diphosphate + H(+). Its function is as follows. Nucleoside triphosphate pyrophosphatase that hydrolyzes dTTP and UTP. May have a dual role in cell division arrest and in preventing the incorporation of modified nucleotides into cellular nucleic acids. This Wolbachia sp. subsp. Brugia malayi (strain TRS) protein is dTTP/UTP pyrophosphatase.